A 503-amino-acid polypeptide reads, in one-letter code: Probable cytosol aminopeptidase (503 aa).

Positions 274 and 279 each coordinate Mn(2+). Lys286 is a catalytic residue. The Mn(2+) site is built by Asp297, Asp356, and Glu358. The active site involves Arg360.

The protein belongs to the peptidase M17 family. Requires Mn(2+) as cofactor.

The protein resides in the cytoplasm. The enzyme catalyses Release of an N-terminal amino acid, Xaa-|-Yaa-, in which Xaa is preferably Leu, but may be other amino acids including Pro although not Arg or Lys, and Yaa may be Pro. Amino acid amides and methyl esters are also readily hydrolyzed, but rates on arylamides are exceedingly low.. It carries out the reaction Release of an N-terminal amino acid, preferentially leucine, but not glutamic or aspartic acids.. Presumably involved in the processing and regular turnover of intracellular proteins. Catalyzes the removal of unsubstituted N-terminal amino acids from various peptides. This chain is Probable cytosol aminopeptidase, found in Burkholderia lata (strain ATCC 17760 / DSM 23089 / LMG 22485 / NCIMB 9086 / R18194 / 383).